The chain runs to 166 residues: Regulatory protein RecX (166 aa).

This sequence belongs to the RecX family.

The protein localises to the cytoplasm. Modulates RecA activity. This Salmonella newport (strain SL254) protein is Regulatory protein RecX.